The sequence spans 167 residues: NAD(P)H-quinone oxidoreductase subunit I, chloroplastic (167 aa).

4Fe-4S ferredoxin-type domains follow at residues 55-84 (GRIH…VDWK) and 95-124 (LNYS…MTEE). [4Fe-4S] cluster-binding residues include C64, C67, C70, C74, C104, C107, C110, and C114.

This sequence belongs to the complex I 23 kDa subunit family. In terms of assembly, NDH is composed of at least 16 different subunits, 5 of which are encoded in the nucleus. The cofactor is [4Fe-4S] cluster.

The protein resides in the plastid. Its subcellular location is the chloroplast thylakoid membrane. It catalyses the reaction a plastoquinone + NADH + (n+1) H(+)(in) = a plastoquinol + NAD(+) + n H(+)(out). The catalysed reaction is a plastoquinone + NADPH + (n+1) H(+)(in) = a plastoquinol + NADP(+) + n H(+)(out). Functionally, NDH shuttles electrons from NAD(P)H:plastoquinone, via FMN and iron-sulfur (Fe-S) centers, to quinones in the photosynthetic chain and possibly in a chloroplast respiratory chain. The immediate electron acceptor for the enzyme in this species is believed to be plastoquinone. Couples the redox reaction to proton translocation, and thus conserves the redox energy in a proton gradient. The protein is NAD(P)H-quinone oxidoreductase subunit I, chloroplastic of Lobularia maritima (Sweet alyssum).